Here is a 94-residue protein sequence, read N- to C-terminus: Pyrimidine/purine nucleoside phosphorylase (94 aa).

It belongs to the nucleoside phosphorylase PpnP family.

The enzyme catalyses a purine D-ribonucleoside + phosphate = a purine nucleobase + alpha-D-ribose 1-phosphate. It catalyses the reaction adenosine + phosphate = alpha-D-ribose 1-phosphate + adenine. The catalysed reaction is cytidine + phosphate = cytosine + alpha-D-ribose 1-phosphate. It carries out the reaction guanosine + phosphate = alpha-D-ribose 1-phosphate + guanine. The enzyme catalyses inosine + phosphate = alpha-D-ribose 1-phosphate + hypoxanthine. It catalyses the reaction thymidine + phosphate = 2-deoxy-alpha-D-ribose 1-phosphate + thymine. The catalysed reaction is uridine + phosphate = alpha-D-ribose 1-phosphate + uracil. It carries out the reaction xanthosine + phosphate = alpha-D-ribose 1-phosphate + xanthine. Its function is as follows. Catalyzes the phosphorolysis of diverse nucleosides, yielding D-ribose 1-phosphate and the respective free bases. Can use uridine, adenosine, guanosine, cytidine, thymidine, inosine and xanthosine as substrates. Also catalyzes the reverse reactions. This is Pyrimidine/purine nucleoside phosphorylase from Cronobacter sakazakii (strain ATCC BAA-894) (Enterobacter sakazakii).